A 485-amino-acid chain; its full sequence is Rop guanine nucleotide exchange factor 2 (485 aa).

A disordered region spans residues 1–36; the sequence is MENLPNHEENDDVGYHQSPGPIDPNDHSASETPVYS. The region spanning 107–485 is the PRONE domain; sequence LAVQEISEPE…YVDKTMRGEE (379 aa).

As to quaternary structure, interacts with ARC10/ROP11. Expressed in the vascular tissues of roots, leaves, sepals, petals and siliques.

Guanine-nucleotide exchange factor (GEF) that acts as an activator of Rop (Rho of plants) GTPases by promoting the exchange of GDP for GTP. The protein is Rop guanine nucleotide exchange factor 2 (ROPGEF2) of Arabidopsis thaliana (Mouse-ear cress).